A 458-amino-acid polypeptide reads, in one-letter code: UDP-N-acetylmuramoylalanine--D-glutamate ligase (458 aa).

124-130 (GSDGKTT) contacts ATP.

The protein belongs to the MurCDEF family.

Its subcellular location is the cytoplasm. The catalysed reaction is UDP-N-acetyl-alpha-D-muramoyl-L-alanine + D-glutamate + ATP = UDP-N-acetyl-alpha-D-muramoyl-L-alanyl-D-glutamate + ADP + phosphate + H(+). It functions in the pathway cell wall biogenesis; peptidoglycan biosynthesis. Cell wall formation. Catalyzes the addition of glutamate to the nucleotide precursor UDP-N-acetylmuramoyl-L-alanine (UMA). The chain is UDP-N-acetylmuramoylalanine--D-glutamate ligase from Clostridium botulinum (strain Kyoto / Type A2).